A 491-amino-acid polypeptide reads, in one-letter code: Carbohydrate ABC transporter substrate-binding protein (491 aa).

Zn(2+) contacts are provided by Asp-212, His-247, His-252, and Glu-256.

This sequence belongs to the bacterial solute-binding protein 1 family. Exists as a monomer, homodimer, homotrimer and homotetramer; oligomerization increases with higher protein concentration.

Its subcellular location is the cell surface. Functionally, probably part of an ABC transporter complex involved in carbohydrate transport. This Streptococcus pneumoniae serotype 4 (strain ATCC BAA-334 / TIGR4) protein is Carbohydrate ABC transporter substrate-binding protein.